Here is a 432-residue protein sequence, read N- to C-terminus: MAHLKFTLTKKLALLIMVAAIVSGVIFLTLQKITDDLIEGYLSSEEYYHEESARYIQKFSKYVSENELSTSDRKAFGEWVKKENYINLTIFKDQELQYDSIYSESDYGKEKLTQYAQNHSHPVKFSDGEGRVIIDGFYSSRYYDLAFALDLLGATLIFLIIVLFGIRQSLRYLKTIHQEIHILEGGELDYEMTIKGHDELAMIAKSIEDLRKAFLDKLKAIEELQAESRSLVTEMSHDMRTPLTSLIMNLEFAKKEGGEAGASKDRYVANAYGKALQLKSLSDNLFAYFLLNKEYEADLETVAVKEVIYDLISDQIAILHQEHFRVHISGELPETYINVNLEELGRVFDNVMSNLLKYADPEEKISITFVSDQEIFEIHVSNTIKLADITPESNGLGERSIARMMSRMQGQFHSIQKNSKYYIVLRFWNTKM.

Topologically, residues 1-12 are cytoplasmic; sequence MAHLKFTLTKKL. A helical membrane pass occupies residues 13–33; sequence ALLIMVAAIVSGVIFLTLQKI. Residues 34-145 are Extracellular-facing; that stretch reads TDDLIEGYLS…GFYSSRYYDL (112 aa). Residues 146-166 form a helical membrane-spanning segment; it reads AFALDLLGATLIFLIIVLFGI. The region spanning 167 to 219 is the HAMP domain; sequence RQSLRYLKTIHQEIHILEGGELDYEMTIKGHDELAMIAKSIEDLRKAFLDKLK. The Cytoplasmic portion of the chain corresponds to 167–432; it reads RQSLRYLKTI…IVLRFWNTKM (266 aa). A Histidine kinase domain is found at 234–432; that stretch reads EMSHDMRTPL…IVLRFWNTKM (199 aa). A Phosphohistidine; by autocatalysis modification is found at H237.

It localises to the cell membrane. The enzyme catalyses ATP + protein L-histidine = ADP + protein N-phospho-L-histidine.. In terms of biological role, member of the two-component regulatory system YrkQ/YrkP. Probably activates YrkP by phosphorylation. The sequence is that of Sensor histidine kinase YrkQ (yrkQ) from Bacillus subtilis (strain 168).